Reading from the N-terminus, the 262-residue chain is Pyridoxine 5'-phosphate synthase (262 aa).

3-amino-2-oxopropyl phosphate is bound at residue asparagine 6. 8-9 serves as a coordination point for 1-deoxy-D-xylulose 5-phosphate; that stretch reads DH. Residue arginine 17 participates in 3-amino-2-oxopropyl phosphate binding. Histidine 43 serves as the catalytic Proton acceptor. 1-deoxy-D-xylulose 5-phosphate contacts are provided by arginine 45 and histidine 50. Glutamate 70 functions as the Proton acceptor in the catalytic mechanism. Position 102 (threonine 102) interacts with 1-deoxy-D-xylulose 5-phosphate. The Proton donor role is filled by histidine 215. 3-amino-2-oxopropyl phosphate contacts are provided by residues glycine 216 and 237 to 238; that span reads GH.

It belongs to the PNP synthase family. Homooctamer; tetramer of dimers.

Its subcellular location is the cytoplasm. It catalyses the reaction 3-amino-2-oxopropyl phosphate + 1-deoxy-D-xylulose 5-phosphate = pyridoxine 5'-phosphate + phosphate + 2 H2O + H(+). The protein operates within cofactor biosynthesis; pyridoxine 5'-phosphate biosynthesis; pyridoxine 5'-phosphate from D-erythrose 4-phosphate: step 5/5. Its function is as follows. Catalyzes the complicated ring closure reaction between the two acyclic compounds 1-deoxy-D-xylulose-5-phosphate (DXP) and 3-amino-2-oxopropyl phosphate (1-amino-acetone-3-phosphate or AAP) to form pyridoxine 5'-phosphate (PNP) and inorganic phosphate. The protein is Pyridoxine 5'-phosphate synthase of Helicobacter acinonychis (strain Sheeba).